Here is a 109-residue protein sequence, read N- to C-terminus: uncharacterized protein (109 aa).

The tract at residues 1 to 26 (MTPRSLPRYGNSSRRKSFPMHRPSNV) is disordered.

This is an uncharacterized protein from Mycobacterium bovis (strain ATCC BAA-935 / AF2122/97).